The primary structure comprises 445 residues: 3-phosphoshikimate 1-carboxyvinyltransferase (445 aa).

Lysine 28, serine 29, and arginine 33 together coordinate 3-phosphoshikimate. Phosphoenolpyruvate is bound at residue lysine 28. Phosphoenolpyruvate contacts are provided by glycine 101 and arginine 129. Residues serine 175, glutamine 177, aspartate 328, and lysine 355 each contribute to the 3-phosphoshikimate site. Glutamine 177 contacts phosphoenolpyruvate. Aspartate 328 serves as the catalytic Proton acceptor. 2 residues coordinate phosphoenolpyruvate: arginine 359 and arginine 402.

This sequence belongs to the EPSP synthase family. In terms of assembly, monomer.

The protein resides in the cytoplasm. The enzyme catalyses 3-phosphoshikimate + phosphoenolpyruvate = 5-O-(1-carboxyvinyl)-3-phosphoshikimate + phosphate. The protein operates within metabolic intermediate biosynthesis; chorismate biosynthesis; chorismate from D-erythrose 4-phosphate and phosphoenolpyruvate: step 6/7. Its function is as follows. Catalyzes the transfer of the enolpyruvyl moiety of phosphoenolpyruvate (PEP) to the 5-hydroxyl of shikimate-3-phosphate (S3P) to produce enolpyruvyl shikimate-3-phosphate and inorganic phosphate. In Rhodopseudomonas palustris (strain HaA2), this protein is 3-phosphoshikimate 1-carboxyvinyltransferase.